The following is an 826-amino-acid chain: Golgin subfamily A member 6-like protein 25 (826 aa).

Disordered regions lie at residues 1–100 (MWPQ…HQEA), 297–327 (QEQE…MRRQ), 345–425 (MHEQ…EMWR), 502–534 (QEEM…MWRQ), 547–646 (RQEE…EQEE), and 658–826 (QEEM…MQEH). The segment covering 31 to 52 (MSKETRQSKLAEAKEQLTDHHP) has biased composition (basic and acidic residues). Composition is skewed to polar residues over residues 53–63 (QTNPSVGTAAS) and 71–83 (NNGT…TSGG). A compositionally biased stretch (basic and acidic residues) spans 86-100 (SPEDEQKASHQHQEA). A coiled-coil region spans residues 157-822 (LEQALSAVAT…EVRLRQQEEK (666 aa)). 2 stretches are compositionally biased toward basic and acidic residues: residues 658-678 (QEEM…KMWE) and 686-826 (QEEK…MQEH).

It belongs to the GOLGA6 family.

The chain is Golgin subfamily A member 6-like protein 25 from Homo sapiens (Human).